The primary structure comprises 318 residues: HTH-type transcriptional regulatory protein TyrR (318 aa).

Positions 15–239 (FIVQSEAMKS…LYNTLYRACS (225 aa)) constitute a Sigma-54 factor interaction; truncated domain. ATP is bound by residues 43–50 (GETGSGKD) and 101–110 (ANKGTVLLDG). Positions 292 to 312 (STRKLAQRLGVSHTAIANKLK) form a DNA-binding region, H-T-H motif.

As to quaternary structure, homodimer. In presence of tyrosine (or high concentrations of phenylalanine or tryptophan) and ATP, it self-associates to form a hexamer.

Its subcellular location is the cytoplasm. Its activity is regulated as follows. The DNA binding ability is drastically reduced in the presence of ATP. Tyrosine further reduces the binding affinity of TyrR in the presence of ATP. Functionally, transcriptional regulator of the TyrR regulon, which includes a number of genes coding for proteins involved in the biosynthesis or transport of the three aromatic amino acids, phenylalanine, tyrosine and tryptophan. These three aromatic amino acids act as effectors which bind to the TyrR protein to form an active regulatory protein. Acts by binding specifically to TyrR boxes in the promoter region of the target genes. Can efficiently repress the transcription of the aroF promoter, but lacks the ability to function as a transcriptional activator. The protein is HTH-type transcriptional regulatory protein TyrR of Haemophilus influenzae (strain ATCC 51907 / DSM 11121 / KW20 / Rd).